The sequence spans 704 residues: Protein kinase C-like 1 (704 aa).

Phosphothreonine; by autocatalysis occurs at positions 89 and 139. Phorbol-ester/DAG-type zinc fingers lie at residues 165-215 and 237-287; these read GHQF…IMQC and PHRF…SNLC. The residue at position 324 (threonine 324) is a Phosphothreonine; by autocatalysis. Residues 375-634 form the Protein kinase domain; that stretch reads FNLLKVLGKG…DGPIRQHCFF (260 aa). ATP-binding positions include 381-389 and lysine 404; that span reads LGKGSFGKV. The Proton acceptor role is filled by aspartate 499. The AGC-kinase C-terminal domain maps to 635–704; sequence RGVDWKRFEN…FSYTNPHFSK (70 aa).

Belongs to the protein kinase superfamily. AGC Ser/Thr protein kinase family. PKC subfamily.

The catalysed reaction is L-seryl-[protein] + ATP = O-phospho-L-seryl-[protein] + ADP + H(+). The enzyme catalyses L-threonyl-[protein] + ATP = O-phospho-L-threonyl-[protein] + ADP + H(+). Diacylglycerol (DAG)-dependent serine/threonine-protein kinase that phosphorylates a range of cellular proteins. Phosphorylates mlk-1, a component of the JNK pathway. Involved in axon regeneration after injury probably by activating the JNK pathway. Plays a role in resistance to fungal infection and in wound healing by promoting expression of antimicrobial peptide nlp-29 in the epidermis downstream of gpa-12 and plc-3 and upstream of tir-1-p38-like pathway. Probably by regulating neuronal transmission in ALA neurons, regulates the decrease in pharyngeal pumping during the quiescent state that precedes each larval molt, downstream of lin-3 and receptor let-23 and phospholipase plc-3. The chain is Protein kinase C-like 1 (tpa-1) from Caenorhabditis elegans.